Consider the following 338-residue polypeptide: RNA 3'-terminal phosphate cyclase (338 aa).

Residues glutamine 103 and 283–287 each bind ATP; that span reads YLADQ. Catalysis depends on histidine 308, which acts as the Tele-AMP-histidine intermediate.

The protein belongs to the RNA 3'-terminal cyclase family. Type 1 subfamily.

Its subcellular location is the cytoplasm. It carries out the reaction a 3'-end 3'-phospho-ribonucleotide-RNA + ATP = a 3'-end 2',3'-cyclophospho-ribonucleotide-RNA + AMP + diphosphate. Its function is as follows. Catalyzes the conversion of 3'-phosphate to a 2',3'-cyclic phosphodiester at the end of RNA. The mechanism of action of the enzyme occurs in 3 steps: (A) adenylation of the enzyme by ATP; (B) transfer of adenylate to an RNA-N3'P to produce RNA-N3'PP5'A; (C) and attack of the adjacent 2'-hydroxyl on the 3'-phosphorus in the diester linkage to produce the cyclic end product. The biological role of this enzyme is unknown but it is likely to function in some aspects of cellular RNA processing. The chain is RNA 3'-terminal phosphate cyclase from Shigella boydii serotype 4 (strain Sb227).